The primary structure comprises 281 residues: Bis(5'-nucleosyl)-tetraphosphatase, symmetrical (281 aa).

This sequence belongs to the Ap4A hydrolase family.

It carries out the reaction P(1),P(4)-bis(5'-adenosyl) tetraphosphate + H2O = 2 ADP + 2 H(+). Functionally, hydrolyzes diadenosine 5',5'''-P1,P4-tetraphosphate to yield ADP. The sequence is that of Bis(5'-nucleosyl)-tetraphosphatase, symmetrical from Pectobacterium carotovorum subsp. carotovorum (strain PC1).